The primary structure comprises 300 residues: Ribosomal RNA small subunit methyltransferase H (300 aa).

Residues 35–37, Asp55, Phe82, Asp100, and Gln107 each bind S-adenosyl-L-methionine; that span reads GGH.

It belongs to the methyltransferase superfamily. RsmH family.

Its subcellular location is the cytoplasm. The catalysed reaction is cytidine(1402) in 16S rRNA + S-adenosyl-L-methionine = N(4)-methylcytidine(1402) in 16S rRNA + S-adenosyl-L-homocysteine + H(+). In terms of biological role, specifically methylates the N4 position of cytidine in position 1402 (C1402) of 16S rRNA. This Chlamydia trachomatis serovar A (strain ATCC VR-571B / DSM 19440 / HAR-13) protein is Ribosomal RNA small subunit methyltransferase H.